A 416-amino-acid polypeptide reads, in one-letter code: MFSRDMTIAGYDPELAAAIEDERQRQEDHIELIASENYASPRVMEAQGSVLTNKYAEGYPGKRYYGGCEHVDVAEQLAIDRAKQLFGADYANVQPHSGSQANAAVFHALLKPGDTILGMSLDHGGHLTHGAKVNFSGKLFNAVQYGINDDGQIDYDEIQRLATEHQPKMVIGGFSAYSQVVDWARLRQIADSVGAYLVVDMAHIAGLVAAGVYPSPIPHADAVTSTTHKTLRGPRGGIILARSNPDLEKKFQSLVFPGTQGGPLMHAIAGKAVAFKEALEPDFKQYQEQVVANARAMARRVIERGYNVVSGGTDNHLFLMDLTPKNLTGKDADAALGRANITVNKNTVPNDPQSPFVTSGLRIGTPAITTRGFKEAEATRLADWICDVLDNMGDESVVERVRGEVEQICREFPVYG.

(6S)-5,6,7,8-tetrahydrofolate-binding positions include L121 and 125–127; that span reads GHL. N6-(pyridoxal phosphate)lysine is present on K229. 354-356 serves as a coordination point for (6S)-5,6,7,8-tetrahydrofolate; sequence SPF.

The protein belongs to the SHMT family. As to quaternary structure, homodimer. Pyridoxal 5'-phosphate serves as cofactor.

It localises to the cytoplasm. It catalyses the reaction (6R)-5,10-methylene-5,6,7,8-tetrahydrofolate + glycine + H2O = (6S)-5,6,7,8-tetrahydrofolate + L-serine. Its pathway is one-carbon metabolism; tetrahydrofolate interconversion. It functions in the pathway amino-acid biosynthesis; glycine biosynthesis; glycine from L-serine: step 1/1. Catalyzes the reversible interconversion of serine and glycine with tetrahydrofolate (THF) serving as the one-carbon carrier. This reaction serves as the major source of one-carbon groups required for the biosynthesis of purines, thymidylate, methionine, and other important biomolecules. Also exhibits THF-independent aldolase activity toward beta-hydroxyamino acids, producing glycine and aldehydes, via a retro-aldol mechanism. The sequence is that of Serine hydroxymethyltransferase from Halorhodospira halophila (strain DSM 244 / SL1) (Ectothiorhodospira halophila (strain DSM 244 / SL1)).